An 860-amino-acid chain; its full sequence is DNA mismatch repair protein MutS (860 aa).

ATP is bound at residue 618–625; sequence GPNMGGKS.

The protein belongs to the DNA mismatch repair MutS family.

This protein is involved in the repair of mismatches in DNA. It is possible that it carries out the mismatch recognition step. This protein has a weak ATPase activity. The polypeptide is DNA mismatch repair protein MutS (Hahella chejuensis (strain KCTC 2396)).